Reading from the N-terminus, the 98-residue chain is UPF0473 protein GTNG_2486 (98 aa).

It belongs to the UPF0473 family.

This Geobacillus thermodenitrificans (strain NG80-2) protein is UPF0473 protein GTNG_2486.